Reading from the N-terminus, the 305-residue chain is Oligopeptide transport system permease protein OppC (305 aa).

6 helical membrane passes run 43–63 (AMVG…APMF), 105–125 (ISIF…VIWG), 166–185 (LFTI…ARIV), 212–232 (LFKH…TLTV), 236–256 (IFTE…LASW), and 274–294 (LFFP…VGDG). The ABC transmembrane type-1 domain occupies 103-292 (ARISIFIGVA…ITMFGFNVVG (190 aa)).

It belongs to the binding-protein-dependent transport system permease family. OppBC subfamily. In terms of assembly, the complex is composed of two ATP-binding proteins (OppD and OppF), two transmembrane proteins (OppB and OppC) and a solute-binding protein (OppA).

Its subcellular location is the cell membrane. Functionally, part of the ABC transporter complex OppABCDF involved in the uptake of oligopeptides. Probably responsible for the translocation of the substrate across the membrane. Required for sporulation and genetic competence. The polypeptide is Oligopeptide transport system permease protein OppC (Bacillus subtilis (strain 168)).